A 521-amino-acid polypeptide reads, in one-letter code: NAD(P)H-quinone oxidoreductase subunit 2 (521 aa).

14 consecutive transmembrane segments (helical) span residues 16–36 (ILPE…DLIG), 40–60 (VALA…GLLV), 80–100 (LSII…LMSV), 110–130 (LAEF…LSAA), 133–153 (LVMV…MTGY), 168–188 (LLIG…LYGL), 212–232 (LGLA…ISAV), 246–266 (PTPV…AVAI), 280–300 (WHVI…VVAL), 308–328 (MLAY…VAGS), 336–356 (VFYM…IILF), 380–400 (LGLS…GFFG), 402–422 (IYIF…LGLV), and 468–488 (VGIV…NPLF).

It belongs to the complex I subunit 2 family. In terms of assembly, NDH-1 can be composed of about 15 different subunits; different subcomplexes with different compositions have been identified which probably have different functions.

It is found in the cellular thylakoid membrane. The enzyme catalyses a plastoquinone + NADH + (n+1) H(+)(in) = a plastoquinol + NAD(+) + n H(+)(out). It carries out the reaction a plastoquinone + NADPH + (n+1) H(+)(in) = a plastoquinol + NADP(+) + n H(+)(out). Functionally, NDH-1 shuttles electrons from an unknown electron donor, via FMN and iron-sulfur (Fe-S) centers, to quinones in the respiratory and/or the photosynthetic chain. The immediate electron acceptor for the enzyme in this species is believed to be plastoquinone. Couples the redox reaction to proton translocation, and thus conserves the redox energy in a proton gradient. Cyanobacterial NDH-1 also plays a role in inorganic carbon-concentration. In Synechocystis sp. (strain ATCC 27184 / PCC 6803 / Kazusa), this protein is NAD(P)H-quinone oxidoreductase subunit 2.